Consider the following 616-residue polypeptide: Chaperone protein HscA (616 aa).

It belongs to the heat shock protein 70 family.

Chaperone involved in the maturation of iron-sulfur cluster-containing proteins. Has a low intrinsic ATPase activity which is markedly stimulated by HscB. Involved in the maturation of IscU. The sequence is that of Chaperone protein HscA from Salmonella arizonae (strain ATCC BAA-731 / CDC346-86 / RSK2980).